Reading from the N-terminus, the 514-residue chain is Probable WRKY transcription factor 4 (514 aa).

3 disordered regions span residues 1–28 (MSEK…PPRP), 175–204 (QPQT…PLPA), and 278–394 (YKGQ…TVTE). Composition is skewed to polar residues over residues 185–198 (QVQS…QIPT) and 286–299 (PPQN…DNTA). The WRKY 1 DNA-binding region spans 223–287 (NVDKPADDGY…YKGQHNHEPP (65 aa)). Residues 300–313 (NINGSSINNNRGSS) are compositionally biased toward low complexity. Positions 315–326 (LGASQFQTNSSN) are enriched in polar residues. Over residues 359-380 (TDVREKDENEPDPKRRSTEVRI) the composition is skewed to basic and acidic residues. A DNA-binding region (WRKY 2) is located at residues 403-468 (SEVDLLDDGY…YEGKHNHDLP (66 aa)). Zn(2+)-binding residues include Cys434, Thr436, Cys439, His463, and His465. Residues 464-514 (NHDLPAAKSSSHAAAAAQLRPDNRPGGLANLNQQQQQQPVARLRLKEEQTT) form a disordered region. Positions 469–480 (AAKSSSHAAAAA) are enriched in low complexity.

As to expression, in young, mature and senescent leaves.

The protein resides in the nucleus. Transcription factor that binds specifically to the W box (5'-(T)TGAC[CT]-3'), a frequently occurring elicitor-responsive cis-acting element. Has a positive role in resistance to necrotrophic pathogens (e.g. Botrytis cinerea), but a negative effect on plant resistance to biotrophic pathogens (e.g. Pseudomonas syringae). The protein is Probable WRKY transcription factor 4 (WRKY4) of Arabidopsis thaliana (Mouse-ear cress).